The sequence spans 597 residues: Elongation factor 4 (597 aa).

A tr-type G domain is found at 2-184; sequence DHIRNFSIIA…ALVAKVPPPK (183 aa). GTP is bound by residues 14–19 and 131–134; these read DHGKST and NKID.

This sequence belongs to the TRAFAC class translation factor GTPase superfamily. Classic translation factor GTPase family. LepA subfamily.

The protein resides in the cell inner membrane. It carries out the reaction GTP + H2O = GDP + phosphate + H(+). Required for accurate and efficient protein synthesis under certain stress conditions. May act as a fidelity factor of the translation reaction, by catalyzing a one-codon backward translocation of tRNAs on improperly translocated ribosomes. Back-translocation proceeds from a post-translocation (POST) complex to a pre-translocation (PRE) complex, thus giving elongation factor G a second chance to translocate the tRNAs correctly. Binds to ribosomes in a GTP-dependent manner. The chain is Elongation factor 4 from Paraburkholderia xenovorans (strain LB400).